Consider the following 768-residue polypeptide: WD repeat-containing protein 20 homolog (768 aa).

Residues 103–122 (ESPEAVAPTSSTYEHHKNEP) form a disordered region. WD repeat units lie at residues 224–264 (IEKT…ASSN), 302–342 (IGEG…LLAV), 345–384 (SYFG…VVCR), and 454–497 (CSLA…LNQG). Residues 531 to 608 (VSPGGAGVNA…VNSESSKKQN (78 aa)) are disordered. Polar residues predominate over residues 539–553 (NASSDSQSITNNHTT). Residues 570 to 582 (FSKFTSGSSSATS) show a composition bias toward low complexity. The segment covering 595–608 (NGASVNSESSKKQN) has biased composition (polar residues). A WD 5 repeat occupies 646–683 (VSHDRLTVLEFREDCVVTACQEGYICTWGRPGRYQPKR). The disordered stretch occupies residues 684 to 749 (DCINSPGTAS…PNITSPSYRV (66 aa)). Polar residues predominate over residues 688-712 (SPGTASPESGQKPSGSTSAMTSSYG). Low complexity predominate over residues 724-733 (SRSSSTYSNS). Residues 734-749 (EQQLRSPNITSPSYRV) show a composition bias toward polar residues.

Interacts with usp-46; the interaction increases the catalytic activity of usp-46 in the presence of wdr-48. As to expression, expressed in several neurons in the head and tail.

In terms of biological role, together with wdr-48, binds to and stimulates the activity of the deubiquitinating enzyme usp-46, leading to deubiquitination and stabilization of the glr-1 glutamate receptor. The chain is WD repeat-containing protein 20 homolog from Caenorhabditis elegans.